The sequence spans 847 residues: Protein translocase subunit SecA (847 aa).

ATP is bound by residues Gln87, 105 to 109 (GEGKT), and Asp495. The interval 828-847 (SSNSPSDARNRPIEHDDNAV) is disordered. The segment covering 835–847 (ARNRPIEHDDNAV) has biased composition (basic and acidic residues).

It belongs to the SecA family. Monomer and homodimer. Part of the essential Sec protein translocation apparatus which comprises SecA, SecYEG and auxiliary proteins SecDF. Other proteins may also be involved.

It localises to the cell membrane. The protein localises to the cytoplasm. It carries out the reaction ATP + H2O + cellular proteinSide 1 = ADP + phosphate + cellular proteinSide 2.. Part of the Sec protein translocase complex. Interacts with the SecYEG preprotein conducting channel. Has a central role in coupling the hydrolysis of ATP to the transfer of proteins into and across the cell membrane, serving as an ATP-driven molecular motor driving the stepwise translocation of polypeptide chains across the membrane. The sequence is that of Protein translocase subunit SecA from Tropheryma whipplei (strain TW08/27) (Whipple's bacillus).